Reading from the N-terminus, the 352-residue chain is MDYQVSSPTYDIDYYTSEPCQKVNVKQIAARLLPPLYSLVFIFGFVGNILVVLILINCKRLKSMTDIYLLNLAISDLFFLLTVPFWAHYAAAQWDFGNTMCQLLTGLYFIGFFSGIFFIILLTIDRYLAIVHAVFALKARTVTFGVVTSVITWVVAVFASLPGIIFTRSQREGLHYTCSSHFPYSQYQFWKNFQTLKIVILGLVLPLLVMVICYSGILKTLLRCRNEKKRHRAVRLIFTIMIVYFLFWAPYNIVLLLNTFQEFFGLNNCSSSNRLDQAMQVTETLGMTHCCINPIIYAFVGEKFRNYLLVFFQKHIAKRFCKCCSIFQQEAPERASSVYTRSTGEQETSVGL.

Topologically, residues 1-30 (MDYQVSSPTYDIDYYTSEPCQKVNVKQIAA) are extracellular. Y3 carries the sulfotyrosine modification. Residues S6 and S7 are each glycosylated (O-linked (GalNAc...) serine). Sulfotyrosine occurs at positions 10, 14, and 15. 2 disulfide bridges follow: C20/C269 and C101/C178. A helical transmembrane segment spans residues 31–58 (RLLPPLYSLVFIFGFVGNILVVLILINC). The Cytoplasmic portion of the chain corresponds to 59 to 68 (KRLKSMTDIY). Residues 69–89 (LLNLAISDLFFLLTVPFWAHY) traverse the membrane as a helical segment. Topologically, residues 90-102 (AAAQWDFGNTMCQ) are extracellular. A helical membrane pass occupies residues 103–124 (LLTGLYFIGFFSGIFFIILLTI). The Cytoplasmic segment spans residues 125 to 141 (DRYLAIVHAVFALKART). A helical membrane pass occupies residues 142–166 (VTFGVVTSVITWVVAVFASLPGIIF). The Extracellular segment spans residues 167-198 (TRSQREGLHYTCSSHFPYSQYQFWKNFQTLKI). The helical transmembrane segment at 199–218 (VILGLVLPLLVMVICYSGIL) threads the bilayer. Over 219–235 (KTLLRCRNEKKRHRAVR) the chain is Cytoplasmic. Residues 236–260 (LIFTIMIVYFLFWAPYNIVLLLNTF) traverse the membrane as a helical segment. The Extracellular portion of the chain corresponds to 261 to 277 (QEFFGLNNCSSSNRLDQ). The chain crosses the membrane as a helical span at residues 278–301 (AMQVTETLGMTHCCINPIIYAFVG). Residues 302–352 (EKFRNYLLVFFQKHIAKRFCKCCSIFQQEAPERASSVYTRSTGEQETSVGL) are Cytoplasmic-facing. 3 S-palmitoyl cysteine lipidation sites follow: C321, C323, and C324. S336, S337, S342, and S349 each carry phosphoserine; by BARK1.

Belongs to the G-protein coupled receptor 1 family. Interacts with PRAF2. Efficient ligand binding to CCL3/MIP-1alpha and CCL4/MIP-1beta requires sulfation, O-glycosylation and sialic acid modifications. Glycosylation on Ser-6 is required for efficient binding of CCL4. Interacts with GRK2. Interacts with ARRB1 and ARRB2. Interacts with CNIH4. Interacts with S100A4; this interaction stimulates T-lymphocyte chemotaxis. Post-translationally, sulfated on at least 2 of the N-terminal tyrosines. Sulfation is required for efficient binding of the chemokines, CCL3 and CCL4. Palmitoylation in the C-terminal is important for cell surface expression. In terms of processing, phosphorylation on serine residues in the C-terminal is stimulated by binding CC chemokines especially by APO-RANTES. Post-translationally, O-glycosylated, but not N-glycosylated. Ser-6 appears to be the major site even if Ser-7 may be also O-glycosylated. Also sialylated glycans present which contribute to chemokine binding. Thr-16 and Ser-17 may also be glycosylated and, if so, with small moieties such as a T-antigen.

The protein resides in the cell membrane. In terms of biological role, receptor for a number of inflammatory CC-chemokines including CCL3/MIP-1-alpha, CCL4/MIP-1-beta and RANTES and subsequently transduces a signal by increasing the intracellular calcium ion level. May play a role in the control of granulocytic lineage proliferation or differentiation. Participates in T-lymphocyte migration to the infection site by acting as a chemotactic receptor. The chain is C-C chemokine receptor type 5 (CCR5) from Trachypithecus francoisi (Francois' leaf monkey).